We begin with the raw amino-acid sequence, 686 residues long: Glycine--tRNA ligase beta subunit (686 aa).

Positions 65-99 (ALSEEKRGPSVERAKDENGEWSKAAQGFARGQGAT) are disordered. The segment covering 67–84 (SEEKRGPSVERAKDENGE) has biased composition (basic and acidic residues).

This sequence belongs to the class-II aminoacyl-tRNA synthetase family. Tetramer of two alpha and two beta subunits.

Its subcellular location is the cytoplasm. It catalyses the reaction tRNA(Gly) + glycine + ATP = glycyl-tRNA(Gly) + AMP + diphosphate. This is Glycine--tRNA ligase beta subunit from Leuconostoc citreum (strain KM20).